Consider the following 147-residue polypeptide: MLGLPWKGGLSWALLLLLLGSQILLIYAWHFHEQRDCDEHNVMARYLPATVEFAVHTFNQQSKDYYAYRLGHILNSWKEQVESKTVFSMELLLGRTRCGKFEDDIDNCHFQESTELNNTFTCFFTISTRPWMTQFSLLNKTCLEGFH.

Residues 1–28 form the signal peptide; it reads MLGLPWKGGLSWALLLLLLGSQILLIYA. A disulfide bond links Cys98 and Cys108. N-linked (GlcNAc...) asparagine glycosylation is found at Asn117 and Asn139. The cysteines at positions 122 and 142 are disulfide-linked.

This sequence belongs to the cystatin family. As to expression, specifically expressed in testis.

It localises to the secreted. This chain is Cystatin-9-like (CST9L), found in Homo sapiens (Human).